Consider the following 362-residue polypeptide: Cationic peroxidase SPC4 (362 aa).

The N-terminal stretch at 1-31 (MSRAPTLAAAAAVAAVVLICSSSTATAADGN) is a signal peptide. Disulfide bonds link Cys50/Cys131, Cys83/Cys88, Cys138/Cys333, and Cys218/Cys245. His81 (proton acceptor) is an active-site residue. Residues Asp82, Val85, Gly87, Asp89, and Ser91 each coordinate Ca(2+). Asn109 carries an N-linked (GlcNAc...) asparagine glycan. Thr111 contributes to the (indol-3-yl)acetate binding site. Pro181 serves as a coordination point for substrate. His211 contacts heme b. Thr212 provides a ligand contact to Ca(2+). Asn234 is a glycosylation site (N-linked (GlcNAc...) asparagine). Ca(2+) is bound by residues Asp257, Thr260, Ala263, and Asp265. Asn332 carries N-linked (GlcNAc...) asparagine glycosylation.

This sequence belongs to the peroxidase family. Classical plant (class III) peroxidase subfamily. As to quaternary structure, monomer. Heme b serves as cofactor. Requires Ca(2+) as cofactor. In terms of processing, the proportions of glycoforms I and II are 35% and 65% respectively. In terms of tissue distribution, present in germinated and ungerminated grain, seedlings, and leaves and stem of the mature plant.

The protein localises to the secreted. The catalysed reaction is 2 a phenolic donor + H2O2 = 2 a phenolic radical donor + 2 H2O. Functionally, removal of H(2)O(2), oxidation of toxic reductants, biosynthesis and degradation of lignin, suberization, auxin catabolism, response to environmental stresses such as wounding, pathogen attack and oxidative stress. These functions might be dependent on each isozyme/isoform in each plant tissue. Has a high preference for hydroxycinnamates as substrates. Substrate preference is ferulic acid &gt; p-coumaric acid &gt; N-acetyl tyrosine methyl ester &gt; N-acetyl-tyrosine &gt; tyrosine &gt; catechol &gt; Gly-Tyr-Gly. May be involved in the formation of diferulate linkages in the plant cell wall. The protein is Cationic peroxidase SPC4 of Sorghum bicolor (Sorghum).